Consider the following 151-residue polypeptide: MNNELNQLDIQDILQLLPHRYPFLMVDRVVHYEMSEERKVLRAIKNVSFNEPFFQGHFPERPVFPGVLILEAMAQATGILAFRMVGKPNPGELYYFASIDNARFKRPVVPGDQLVLDVEYLKERRGIAKFTGVATVDGELVCSAELMCAKR.

The active site involves His-57.

This sequence belongs to the thioester dehydratase family. FabZ subfamily.

It is found in the cytoplasm. It carries out the reaction a (3R)-hydroxyacyl-[ACP] = a (2E)-enoyl-[ACP] + H2O. Involved in unsaturated fatty acids biosynthesis. Catalyzes the dehydration of short chain beta-hydroxyacyl-ACPs and long chain saturated and unsaturated beta-hydroxyacyl-ACPs. The chain is 3-hydroxyacyl-[acyl-carrier-protein] dehydratase FabZ from Tolumonas auensis (strain DSM 9187 / NBRC 110442 / TA 4).